A 456-amino-acid polypeptide reads, in one-letter code: Probable hexose phosphate transport protein (456 aa).

Transmembrane regions (helical) follow at residues 34-54, 70-90, 113-133, 161-181, 185-205, 257-277, 302-322, 331-351, 363-383, 394-414, and 421-441; these read IFYSMFLGYVFFYFTRKSFTF, LGIIGSTLYITYGISKFVSGV, IFFGLSSTIPLFVLFWGINGW, VWSTSHNIGGALIPVLTGVAI, GWRGAMFIPGIICIIMGFILI, YVLSNKWLWFLSFASFFIYVV, LCVSLFEIGGLFGMLLAGWLS, GPMNVVFSLGLLVSILGLWGT, FLFIIGFFLFGPQMMIGLAAA, ASGFTGWFAYFGAAFAGYPLG, and GWHGFFVALLACALIALILFL.

Belongs to the major facilitator superfamily. Organophosphate:Pi antiporter (OPA) (TC 2.A.1.4) family.

It is found in the cell membrane. Its function is as follows. Transport protein for sugar phosphate uptake. This chain is Probable hexose phosphate transport protein, found in Chlamydia trachomatis serovar D (strain ATCC VR-885 / DSM 19411 / UW-3/Cx).